A 182-amino-acid chain; its full sequence is MKHDEQLLIRSTTVLGVIRDGKAALGSDGQMTLGNTVLKHSTRKTRRLYHGQIIAGFAGATADAVTLLDRFEEKLEAFSGRLERAAVELARDWRTDKYLRRLEAMLAIVTAEKALIISGTGDVIEPEDGIVAIGSGSMYALAAARSLLAHTTLSAREIVHESLKIAADICIYTNDHIVIEEV.

Threonine 12 is an active-site residue. Na(+)-binding residues include alanine 167, cysteine 170, and threonine 173.

The protein belongs to the peptidase T1B family. HslV subfamily. As to quaternary structure, a double ring-shaped homohexamer of HslV is capped on each side by a ring-shaped HslU homohexamer. The assembly of the HslU/HslV complex is dependent on binding of ATP.

It is found in the cytoplasm. It carries out the reaction ATP-dependent cleavage of peptide bonds with broad specificity.. Allosterically activated by HslU binding. Its function is as follows. Protease subunit of a proteasome-like degradation complex believed to be a general protein degrading machinery. This is ATP-dependent protease subunit HslV from Chlorobium phaeobacteroides (strain DSM 266 / SMG 266 / 2430).